Reading from the N-terminus, the 207-residue chain is Small ribosomal subunit protein uS4c (207 aa).

Residues 92 to 156 (MRLDNILFRL…YQSIITKRIE (65 aa)) form the S4 RNA-binding domain.

Belongs to the universal ribosomal protein uS4 family. In terms of assembly, part of the 30S ribosomal subunit. Contacts protein S5. The interaction surface between S4 and S5 is involved in control of translational fidelity.

It localises to the plastid. It is found in the chloroplast. In terms of biological role, one of the primary rRNA binding proteins, it binds directly to 16S rRNA where it nucleates assembly of the body of the 30S subunit. Functionally, with S5 and S12 plays an important role in translational accuracy. This is Small ribosomal subunit protein uS4c (rps4) from Equisetum arvense (Field horsetail).